A 220-amino-acid chain; its full sequence is MDLKQIAGEYAATFVKDGMKVGLGTGSTAYWTIQKLGQRVKEGLSIQAVPTSKETEALAQQLNIPLISLNDVQSLDLTIDGADEIDSNLQLIKGGGGALLREKIVASSSKELIIIVDESKVVTRLGTFPLPIEIIPFAWKQTESKIQSLGCQTTLRLKNNETFITDNNNMIVDCIFPNHIPTPSDLHKRLKMITGVVETGLFVNMTSKAIIGTKNGIQEL.

Substrate-binding positions include 25 to 28 (TGST), 80 to 83 (DGAD), and 93 to 96 (KGGG). The Proton acceptor role is filled by glutamate 102. Residue lysine 120 coordinates substrate.

It belongs to the ribose 5-phosphate isomerase family. As to quaternary structure, homodimer.

The catalysed reaction is aldehydo-D-ribose 5-phosphate = D-ribulose 5-phosphate. It participates in carbohydrate degradation; pentose phosphate pathway; D-ribose 5-phosphate from D-ribulose 5-phosphate (non-oxidative stage): step 1/1. In terms of biological role, catalyzes the reversible conversion of ribose-5-phosphate to ribulose 5-phosphate. The sequence is that of Ribose-5-phosphate isomerase A from Bacillus thuringiensis subsp. konkukian (strain 97-27).